The following is a 229-amino-acid chain: Heptaprenylglyceryl phosphate synthase (229 aa).

Lysine 12 contributes to the sn-glycerol 1-phosphate binding site. 2 residues coordinate Mg(2+): aspartate 14 and serine 40. Residues 159 to 164, glycine 189, and 209 to 210 each bind sn-glycerol 1-phosphate; these read YLEYSG and GN.

Belongs to the GGGP/HepGP synthase family. Group I subfamily. As to quaternary structure, homodimer. The cofactor is Mg(2+).

The enzyme catalyses sn-glycerol 1-phosphate + all-trans-heptaprenyl diphosphate = 3-heptaprenyl-sn-glycero-1-phosphate + diphosphate. It functions in the pathway membrane lipid metabolism; glycerophospholipid metabolism. Functionally, prenyltransferase that catalyzes in vivo the transfer of the heptaprenyl moiety of heptaprenyl pyrophosphate (HepPP; 35 carbon atoms) to the C3 hydroxyl of sn-glycerol-1-phosphate (G1P), producing heptaprenylglyceryl phosphate (HepGP). This reaction is an ether-bond-formation step in the biosynthesis of archaea-type G1P-based membrane lipids found in Bacillales. The sequence is that of Heptaprenylglyceryl phosphate synthase from Bacillus mycoides (strain KBAB4) (Bacillus weihenstephanensis).